The following is a 325-amino-acid chain: Tagatose 1,6-diphosphate aldolase (325 aa).

This sequence belongs to the aldolase LacD family.

It catalyses the reaction D-tagatofuranose 1,6-bisphosphate = D-glyceraldehyde 3-phosphate + dihydroxyacetone phosphate. The protein operates within carbohydrate metabolism; D-tagatose 6-phosphate degradation; D-glyceraldehyde 3-phosphate and glycerone phosphate from D-tagatose 6-phosphate: step 2/2. This Staphylococcus epidermidis (strain ATCC 35984 / DSM 28319 / BCRC 17069 / CCUG 31568 / BM 3577 / RP62A) protein is Tagatose 1,6-diphosphate aldolase.